The following is a 442-amino-acid chain: D-serine dehydratase (442 aa).

An N6-(pyridoxal phosphate)lysine modification is found at Lys-118.

The protein belongs to the serine/threonine dehydratase family. DsdA subfamily. As to quaternary structure, monomer. The cofactor is pyridoxal 5'-phosphate.

It carries out the reaction D-serine = pyruvate + NH4(+). In Escherichia coli O81 (strain ED1a), this protein is D-serine dehydratase.